The chain runs to 591 residues: Serine/threonine-protein kinase Nek2 (591 aa).

Residues 4–258 enclose the Protein kinase domain; that stretch reads YEVLEQIGKG…AAQLLKHPQL (255 aa). Residues 10–18 and Lys33 contribute to the ATP site; that span reads IGKGAFGSA. The active-site Proton acceptor is Asp129. 3 disordered regions span residues 309 to 331, 387 to 408, and 500 to 534; these read LGNE…SSTR, EPPK…TTPN, and RTDG…DTSS. Polar residues-rich tracts occupy residues 391 to 408 and 504 to 534; these read TSYN…TTPN and DNGS…DTSS.

It belongs to the protein kinase superfamily. NEK Ser/Thr protein kinase family. NIMA subfamily.

The catalysed reaction is L-seryl-[protein] + ATP = O-phospho-L-seryl-[protein] + ADP + H(+). It catalyses the reaction L-threonyl-[protein] + ATP = O-phospho-L-threonyl-[protein] + ADP + H(+). In terms of biological role, may be involved in plant development processes. The sequence is that of Serine/threonine-protein kinase Nek2 (NEK2) from Oryza sativa subsp. indica (Rice).